The following is a 162-amino-acid chain: 2-C-methyl-D-erythritol 2,4-cyclodiphosphate synthase (162 aa).

Residues D12 and H14 each coordinate a divalent metal cation. 4-CDP-2-C-methyl-D-erythritol 2-phosphate contacts are provided by residues D12–H14 and H38–S39. H46 serves as a coordination point for a divalent metal cation. Residues D60–G62, F65–D69, and R146 contribute to the 4-CDP-2-C-methyl-D-erythritol 2-phosphate site.

The protein belongs to the IspF family. Homotrimer. The cofactor is a divalent metal cation.

The enzyme catalyses 4-CDP-2-C-methyl-D-erythritol 2-phosphate = 2-C-methyl-D-erythritol 2,4-cyclic diphosphate + CMP. The protein operates within isoprenoid biosynthesis; isopentenyl diphosphate biosynthesis via DXP pathway; isopentenyl diphosphate from 1-deoxy-D-xylulose 5-phosphate: step 4/6. In terms of biological role, involved in the biosynthesis of isopentenyl diphosphate (IPP) and dimethylallyl diphosphate (DMAPP), two major building blocks of isoprenoid compounds. Catalyzes the conversion of 4-diphosphocytidyl-2-C-methyl-D-erythritol 2-phosphate (CDP-ME2P) to 2-C-methyl-D-erythritol 2,4-cyclodiphosphate (ME-CPP) with a corresponding release of cytidine 5-monophosphate (CMP). This Bordetella parapertussis (strain 12822 / ATCC BAA-587 / NCTC 13253) protein is 2-C-methyl-D-erythritol 2,4-cyclodiphosphate synthase.